Here is a 248-residue protein sequence, read N- to C-terminus: Aspartate/glutamate leucyltransferase (248 aa).

It belongs to the R-transferase family. Bpt subfamily.

It is found in the cytoplasm. It catalyses the reaction N-terminal L-glutamyl-[protein] + L-leucyl-tRNA(Leu) = N-terminal L-leucyl-L-glutamyl-[protein] + tRNA(Leu) + H(+). The catalysed reaction is N-terminal L-aspartyl-[protein] + L-leucyl-tRNA(Leu) = N-terminal L-leucyl-L-aspartyl-[protein] + tRNA(Leu) + H(+). Its function is as follows. Functions in the N-end rule pathway of protein degradation where it conjugates Leu from its aminoacyl-tRNA to the N-termini of proteins containing an N-terminal aspartate or glutamate. This chain is Aspartate/glutamate leucyltransferase, found in Methylobacterium nodulans (strain LMG 21967 / CNCM I-2342 / ORS 2060).